The primary structure comprises 460 residues: Elongation factor 1-alpha-A (460 aa).

Gly2 is modified (n,N,N-trimethylglycine). At Lys3 the chain carries N6,N6-dimethyllysine; alternate. Lys3 carries the N6-methyllysine; alternate modification. Positions 5-240 (KGHINVVVIG…DSIEPPARPT (236 aa)) constitute a tr-type G domain. The tract at residues 14–21 (GHVDSGKS) is G1. Residue 14 to 21 (GHVDSGKS) coordinates GTP. Lys30 is subject to N6-methyllysine. Residues 70–74 (GITID) are G2. Lys79 carries the post-translational modification N6,N6,N6-trimethyllysine. A G3 region spans residues 91–94 (DAPG). Residues 91 to 95 (DAPGH) and 153 to 156 (NKMD) contribute to the GTP site. The tract at residues 153–156 (NKMD) is G4. The G5 stretch occupies residues 192 to 194 (SGF). Lys316 is subject to N6,N6-dimethyllysine; alternate. At Lys316 the chain carries N6-methyllysine; alternate. At Lys390 the chain carries N6-methyllysine.

Belongs to the TRAFAC class translation factor GTPase superfamily. Classic translation factor GTPase family. EF-Tu/EF-1A subfamily.

It is found in the cytoplasm. This protein promotes the GTP-dependent binding of aminoacyl-tRNA to the A-site of ribosomes during protein biosynthesis. This chain is Elongation factor 1-alpha-A (tef101), found in Schizosaccharomyces pombe (strain 972 / ATCC 24843) (Fission yeast).